The chain runs to 93 residues: Large ribosomal subunit protein uL23 (93 aa).

Belongs to the universal ribosomal protein uL23 family. As to quaternary structure, part of the 50S ribosomal subunit. Contacts protein L29, and trigger factor when it is bound to the ribosome.

Functionally, one of the early assembly proteins it binds 23S rRNA. One of the proteins that surrounds the polypeptide exit tunnel on the outside of the ribosome. Forms the main docking site for trigger factor binding to the ribosome. In Sulfurovum sp. (strain NBC37-1), this protein is Large ribosomal subunit protein uL23.